The following is a 109-amino-acid chain: Protein AC78 (109 aa).

The chain crosses the membrane as a helical span at residues 61 to 81 (GIIILISVVAFIALFLLLYVI).

The protein localises to the host membrane. The protein resides in the virion. Functionally, plays an essential role in budded virus production and occlusion body formation. The protein is Protein AC78 (AC78) of Autographa californica nuclear polyhedrosis virus (AcMNPV).